Here is a 567-residue protein sequence, read N- to C-terminus: Proline--tRNA ligase (567 aa).

This sequence belongs to the class-II aminoacyl-tRNA synthetase family. ProS type 1 subfamily. Homodimer.

It is found in the cytoplasm. The enzyme catalyses tRNA(Pro) + L-proline + ATP = L-prolyl-tRNA(Pro) + AMP + diphosphate. Catalyzes the attachment of proline to tRNA(Pro) in a two-step reaction: proline is first activated by ATP to form Pro-AMP and then transferred to the acceptor end of tRNA(Pro). As ProRS can inadvertently accommodate and process non-cognate amino acids such as alanine and cysteine, to avoid such errors it has two additional distinct editing activities against alanine. One activity is designated as 'pretransfer' editing and involves the tRNA(Pro)-independent hydrolysis of activated Ala-AMP. The other activity is designated 'posttransfer' editing and involves deacylation of mischarged Ala-tRNA(Pro). The misacylated Cys-tRNA(Pro) is not edited by ProRS. In Geobacillus thermodenitrificans (strain NG80-2), this protein is Proline--tRNA ligase.